Here is a 130-residue protein sequence, read N- to C-terminus: Small ribosomal subunit protein uS8 (130 aa).

It belongs to the universal ribosomal protein uS8 family. In terms of assembly, part of the 30S ribosomal subunit. Contacts proteins S5 and S12.

One of the primary rRNA binding proteins, it binds directly to 16S rRNA central domain where it helps coordinate assembly of the platform of the 30S subunit. In Sodalis glossinidius (strain morsitans), this protein is Small ribosomal subunit protein uS8.